The primary structure comprises 79 residues: Sec-independent protein translocase protein TatA (79 aa).

Residues 1–21 (MGFSTTHLLIFLVIIIVIFGT) traverse the membrane as a helical segment. The segment at 43–63 (KEGSDKAADAPAAAPQQVASS) is disordered. Residues 51–63 (DAPAAAPQQVASS) show a composition bias toward low complexity.

This sequence belongs to the TatA/E family. As to quaternary structure, the Tat system comprises two distinct complexes: a TatABC complex, containing multiple copies of TatA, TatB and TatC subunits, and a separate TatA complex, containing only TatA subunits. Substrates initially bind to the TatABC complex, which probably triggers association of the separate TatA complex to form the active translocon.

The protein localises to the cell inner membrane. Functionally, part of the twin-arginine translocation (Tat) system that transports large folded proteins containing a characteristic twin-arginine motif in their signal peptide across membranes. TatA could form the protein-conducting channel of the Tat system. This is Sec-independent protein translocase protein TatA from Albidiferax ferrireducens (strain ATCC BAA-621 / DSM 15236 / T118) (Rhodoferax ferrireducens).